The primary structure comprises 330 residues: Aspartate--ammonia ligase (330 aa).

Belongs to the class-II aminoacyl-tRNA synthetase family. AsnA subfamily.

The protein resides in the cytoplasm. It carries out the reaction L-aspartate + NH4(+) + ATP = L-asparagine + AMP + diphosphate + H(+). The protein operates within amino-acid biosynthesis; L-asparagine biosynthesis; L-asparagine from L-aspartate (ammonia route): step 1/1. This chain is Aspartate--ammonia ligase, found in Edwardsiella ictaluri (strain 93-146).